A 220-amino-acid polypeptide reads, in one-letter code: Probable septum site-determining protein MinC (220 aa).

Belongs to the MinC family. Interacts with MinD and FtsZ.

Its function is as follows. Cell division inhibitor that blocks the formation of polar Z ring septums. Rapidly oscillates between the poles of the cell to destabilize FtsZ filaments that have formed before they mature into polar Z rings. Prevents FtsZ polymerization. The sequence is that of Probable septum site-determining protein MinC from Vibrio campbellii (strain ATCC BAA-1116).